A 496-amino-acid chain; its full sequence is Apolipoprotein N-acyltransferase (496 aa).

6 consecutive transmembrane segments (helical) span residues 23-43, 50-70, 84-104, 126-146, 171-191, and 205-225; these read GIATSTHFWLLFMPLSLFILW, LANFLWGFFFILVSHSWLYEL, LIISISILFGCSIIGGILVYL, LTIKVLLLSFAWGIGEFILSQ, WIGASGLCVVQLTIGFWIYLI, and FLFGLLILVILHFLGGLTNPI. Positions 236-464 constitute a CN hydrolase domain; sequence WQTNMPTREK…NDVVNPNFSI (229 aa). Glutamate 276 acts as the Proton acceptor in catalysis. Lysine 325 is a catalytic residue. Cysteine 374 serves as the catalytic Nucleophile. A helical transmembrane segment spans residues 476–496; that stretch reads PLFLLCLFLIGLNLYFGKFTN.

Belongs to the CN hydrolase family. Apolipoprotein N-acyltransferase subfamily.

Its subcellular location is the cell inner membrane. It carries out the reaction N-terminal S-1,2-diacyl-sn-glyceryl-L-cysteinyl-[lipoprotein] + a glycerophospholipid = N-acyl-S-1,2-diacyl-sn-glyceryl-L-cysteinyl-[lipoprotein] + a 2-acyl-sn-glycero-3-phospholipid + H(+). The protein operates within protein modification; lipoprotein biosynthesis (N-acyl transfer). Its function is as follows. Catalyzes the phospholipid dependent N-acylation of the N-terminal cysteine of apolipoprotein, the last step in lipoprotein maturation. The sequence is that of Apolipoprotein N-acyltransferase from Prochlorococcus marinus subsp. pastoris (strain CCMP1986 / NIES-2087 / MED4).